The following is a 218-amino-acid chain: Thiopurine S-methyltransferase (218 aa).

S-adenosyl-L-methionine contacts are provided by Trp10, Leu45, Glu66, and Arg123.

This sequence belongs to the class I-like SAM-binding methyltransferase superfamily. TPMT family.

Its subcellular location is the cytoplasm. It catalyses the reaction S-adenosyl-L-methionine + a thiopurine = S-adenosyl-L-homocysteine + a thiopurine S-methylether.. The sequence is that of Thiopurine S-methyltransferase from Xanthomonas axonopodis pv. citri (strain 306).